Consider the following 87-residue polypeptide: UPF0367 protein P9211_01391 (87 aa).

The protein belongs to the UPF0367 family.

The polypeptide is UPF0367 protein P9211_01391 (Prochlorococcus marinus (strain MIT 9211)).